We begin with the raw amino-acid sequence, 360 residues long: Putative transcription factor A494R (360 aa).

Residues 153–175 (CTCGGQMELWVNSTQSDLVCNEC) fold into a zinc finger.

It belongs to the nucleo-cytoplasmic large DNA viruses (NCLDVs) VLTF-3 family.

Putative transcription factor. The polypeptide is Putative transcription factor A494R (Paramecium bursaria Chlorella virus 1 (PBCV-1)).